Reading from the N-terminus, the 402-residue chain is MMRALGYPRHISMENFRTPNFGLVSEVLLWLVKRYEPQTDIPSDTETEQDRVFFIKAIAQFMATKAHIKLNTKKLYQADGYAVKELLKITSVLYNAMKTKGMEGSNVGEEDISKFKFDLGSKIADLKAARQLASEITAKGASLYDLLGKEVELRELRTEAIARPLEINETEKVMRIAIKDILAQVQKTKDLLNNVASDEANLEAKIEKRKLELERNRKRLQTLQSVRPAFMDEYEKVEEELQKQYDVYLEKFRNLAYLEQQLEDHHRMEQERFEEAENTLRLMQNKLKEEEKRLLKSGSNDDSDIDIQEDDESDSELEDRRLSKPRTAMEVLMQGRPSKRIVGTMQGGDSDEDEDSEDSEMNMEDDEEDDDDLEDESIALSPAKPSRRVRKPEPLDESDNDF.

Residues 187–297 (KTKDLLNNVA…KEEEKRLLKS (111 aa)) are a coiled coil. A disordered region spans residues 292-402 (KRLLKSGSND…EPLDESDNDF (111 aa)). 2 stretches are compositionally biased toward acidic residues: residues 301–317 (DDSDIDIQEDDESDSEL) and 349–377 (DSDEDEDSEDSEMNMEDDEEDDDDLEDES). Ser-303, Ser-313, and Ser-315 each carry phosphoserine. Ser-398 carries the post-translational modification Phosphoserine.

This sequence belongs to the CLUAP1 family. In terms of assembly, interacts with CLU/clusterin. Interacts with UBXN10; the interaction is direct.

The protein resides in the cell projection. It is found in the cilium. It localises to the nucleus. Its function is as follows. Required for cilia biogenesis. Appears to function within the multiple intraflagellar transport complex B (IFT-B). Key regulator of hedgehog signaling. The polypeptide is Clusterin-associated protein 1 (Cluap1) (Rattus norvegicus (Rat)).